We begin with the raw amino-acid sequence, 72 residues long: Protein kish-A (72 aa).

The signal sequence occupies residues 1-26 (MSAIFNFQSLLTVILLLICTCAYIRS). Residues 27 to 53 (LTPSLLDKNKTGFLGIFWKCARIGERK) lie on the Extracellular side of the membrane. N-linked (GlcNAc...) asparagine glycosylation occurs at asparagine 35. A helical transmembrane segment spans residues 54-71 (SPYVAFCCIVMALTILFS). Glutamate 72 is a topological domain (cytoplasmic).

It belongs to the KISH family.

It localises to the golgi apparatus membrane. Involved in the early part of the secretory pathway. This Danio rerio (Zebrafish) protein is Protein kish-A (tmem167a).